Reading from the N-terminus, the 475-residue chain is Glutamyl-tRNA(Gln) amidotransferase subunit A (475 aa).

Residues lysine 69 and serine 144 each act as charge relay system in the active site. Serine 168 (acyl-ester intermediate) is an active-site residue.

This sequence belongs to the amidase family. GatA subfamily. As to quaternary structure, heterotrimer of A, B and C subunits.

It carries out the reaction L-glutamyl-tRNA(Gln) + L-glutamine + ATP + H2O = L-glutaminyl-tRNA(Gln) + L-glutamate + ADP + phosphate + H(+). Functionally, allows the formation of correctly charged Gln-tRNA(Gln) through the transamidation of misacylated Glu-tRNA(Gln) in organisms which lack glutaminyl-tRNA synthetase. The reaction takes place in the presence of glutamine and ATP through an activated gamma-phospho-Glu-tRNA(Gln). In Methanosarcina barkeri (strain Fusaro / DSM 804), this protein is Glutamyl-tRNA(Gln) amidotransferase subunit A.